The following is a 794-amino-acid chain: Protein SPA1-RELATED 4 (794 aa).

One can recognise a Protein kinase domain in the interval 1–268 (MKGSSESSSR…MSELLQSEFI (268 aa)). Residues 126–165 (SCSDSGSDEDATTKSREIGSSRQEEILSERRSKQQEEVKK) are disordered. Residues 136-165 (ATTKSREIGSSRQEEILSERRSKQQEEVKK) are compositionally biased toward basic and acidic residues. Positions 272-326 (RENLEEREAAMELRDRIEEQELLLEFLFLIQQRKQEAADKLQDTISLLSSDIDQV) form a coiled coil. Disordered stretches follow at residues 352 to 373 (QGAETTAAEEENDDNSIDEESK) and 428 to 447 (GRSSEKSSMSQPSKDPINDS). Residues 358–369 (AAEEENDDNSID) show a composition bias toward acidic residues. WD repeat units follow at residues 482–521 (NSSNLVCAIGFDRDGEFFATAGVNKKIKIFECESIIKDGR), 531–571 (ASRS…LVTE), 574–614 (EHEK…SIGT), 616–656 (KTKA…LPLC), 660–698 (GHHKTVSYVRFVDSSTLVSSSTDNTLKLWDLSMSISGIN), 707–746 (GHTNVKNFVGLSVSDGYIATGSETNEVFVYHKAFPMPVLS), and 762–794 (DASQFISSVCWRGQSSTLVAANSTGNIKILEMV). The DWD box motif lies at 635–649 (AFGSADHKVYYYDLR).

As to quaternary structure, interacts with COP1 and CO. Binds to CRY1 in response to blue light, this interaction prevents SPA1/COP1 complex formation and thus avoid COP1-dependent degradation of the transcription factor HY5 by the proteasome and promotes hypocotyl elongation.

It is found in the nucleus. Repressor of photomorphogenesis in the light. Probably part of the COP1/SPA E3 ubiquitin-protein ligase complex. The polypeptide is Protein SPA1-RELATED 4 (SPA4) (Arabidopsis thaliana (Mouse-ear cress)).